The following is a 119-amino-acid chain: Large ribosomal subunit protein bL19 (119 aa).

The protein belongs to the bacterial ribosomal protein bL19 family.

Its function is as follows. This protein is located at the 30S-50S ribosomal subunit interface and may play a role in the structure and function of the aminoacyl-tRNA binding site. The polypeptide is Large ribosomal subunit protein bL19 (Pelobacter propionicus (strain DSM 2379 / NBRC 103807 / OttBd1)).